Reading from the N-terminus, the 695-residue chain is Follicle-stimulating hormone receptor (695 aa).

An N-terminal signal peptide occupies residues 1–17 (MALLLVALLAFLSLGSG). Intrachain disulfides connect C18–C25 and C23–C32. In terms of domain architecture, LRRNT spans 18 to 46 (CHHRLCHCSNGVFLCQESKVTEIPSDLPR). Topologically, residues 18-366 (CHHRLCHCSN…EDIMGDDILR (349 aa)) are extracellular. 9 LRR repeats span residues 49-72 (VELR…FGDL), 73-97 (EKIE…LPKL), 98-118 (HEIR…AFQN), 119-143 (LPNL…KIQS), 144-169 (LQKV…MGLS), 170-192 (FESM…AFNG), 193-216 (TQLD…VFQG), 217-240 (ASGP…GLEN), and 241-259 (LKKL…PSLE). N-linked (GlcNAc...) asparagine glycans are attached at residues N191 and N199. Intrachain disulfides connect C275–C346, C276–C292, C276–C356, and C292–C338. N293 carries N-linked (GlcNAc...) asparagine glycosylation. Y335 is modified (sulfotyrosine). The helical transmembrane segment at 367–387 (VLIWFISILAITGNILVLVIL) threads the bilayer. Topologically, residues 388-398 (ITSQYKLTVPR) are cytoplasmic. Residues 399–421 (FLMCNLAFADLCIGIYLLLIASV) form a helical membrane-spanning segment. The Extracellular segment spans residues 422-443 (DVHTKTEYHNYAIDWQTGAGCD). An intrachain disulfide couples C442 to C517. A helical transmembrane segment spans residues 444–465 (AAGFFTVFASELSVYTLTAITL). Residues 466–485 (ERWHTITHAMQLECKVQLRH) lie on the Cytoplasmic side of the membrane. The chain crosses the membrane as a helical span at residues 486-508 (AASIMLVGWIFAFAVALFPIFGI). Residues 509-528 (SSYMKVSICLPMDIDSPLSQ) lie on the Extracellular side of the membrane. The helical transmembrane segment at 529–550 (LYVMSLLVLNVLAFVVICGCYT) threads the bilayer. The Cytoplasmic segment spans residues 551–573 (HIYLTVRNPNITSSSSDTKIAKR). Residues 574–597 (MAMLIFTDFLCMAPISFFAISASL) form a helical membrane-spanning segment. The Extracellular portion of the chain corresponds to 598–608 (KVPLITVSKSK). The helical transmembrane segment at 609–630 (ILLVLFYPINSCANPFLYAIFT) threads the bilayer. Over 631-695 (KNFRRDFFIL…LIPLRHLAKN (65 aa)) the chain is Cytoplasmic.

Belongs to the G-protein coupled receptor 1 family. FSH/LSH/TSH subfamily. Homotrimer. Functions as a homotrimer binding the FSH hormone heterodimer composed of CGA and FSHB. Interacts with ARRB2. Interacts with APPL2; interaction is independent of follicle stimulating hormone stimulation. In terms of processing, N-glycosylated; indirectly required for FSH-binding, possibly via a conformational change that allows high affinity binding of hormone. Post-translationally, sulfated.

The protein resides in the cell membrane. In terms of biological role, g protein-coupled receptor for follitropin, the follicle-stimulating hormone. Through cAMP production activates the downstream PI3K-AKT and ERK1/ERK2 signaling pathways. The chain is Follicle-stimulating hormone receptor (FSHR) from Bos taurus (Bovine).